Reading from the N-terminus, the 89-residue chain is DNA-directed RNA polymerase subunit Rpo6 (89 aa).

This sequence belongs to the archaeal Rpo6/eukaryotic RPB6 RNA polymerase subunit family. In terms of assembly, part of the RNA polymerase complex.

Its subcellular location is the cytoplasm. It carries out the reaction RNA(n) + a ribonucleoside 5'-triphosphate = RNA(n+1) + diphosphate. Functionally, DNA-dependent RNA polymerase (RNAP) catalyzes the transcription of DNA into RNA using the four ribonucleoside triphosphates as substrates. This Aeropyrum pernix (strain ATCC 700893 / DSM 11879 / JCM 9820 / NBRC 100138 / K1) protein is DNA-directed RNA polymerase subunit Rpo6.